Consider the following 630-residue polypeptide: 1-deoxy-D-xylulose-5-phosphate synthase (630 aa).

Residues His-87 and 128–130 (GHS) each bind thiamine diphosphate. Asp-159 contacts Mg(2+). Residues 160-161 (GA), Asn-188, Phe-295, and Glu-377 each bind thiamine diphosphate. Asn-188 contributes to the Mg(2+) binding site.

Belongs to the transketolase family. DXPS subfamily. As to quaternary structure, homodimer. Mg(2+) is required as a cofactor. The cofactor is thiamine diphosphate.

It carries out the reaction D-glyceraldehyde 3-phosphate + pyruvate + H(+) = 1-deoxy-D-xylulose 5-phosphate + CO2. It functions in the pathway metabolic intermediate biosynthesis; 1-deoxy-D-xylulose 5-phosphate biosynthesis; 1-deoxy-D-xylulose 5-phosphate from D-glyceraldehyde 3-phosphate and pyruvate: step 1/1. Catalyzes the acyloin condensation reaction between C atoms 2 and 3 of pyruvate and glyceraldehyde 3-phosphate to yield 1-deoxy-D-xylulose-5-phosphate (DXP). The polypeptide is 1-deoxy-D-xylulose-5-phosphate synthase (Pseudomonas syringae pv. syringae (strain B728a)).